Reading from the N-terminus, the 509-residue chain is Serine/threonine protein kinase OSK4 (509 aa).

The region spanning 17–269 (YNLGRTLGIG…IREIREHQWF (253 aa)) is the Protein kinase domain. Residues 23-31 (LGIGSFGKV) and Lys46 contribute to the ATP site. The active-site Proton acceptor is Asp140. The region spanning 290 to 330 (MIDEDTLQDVVNLGYEKDHVCESLRNRLQNEATVAYYLLLD) is the UBA domain. Positions 460 to 508 (NGRLPAVIKFEIQLYKSRDEKYLLDMQRVTGPQLLFLDFCAAFLTKLRV) constitute a KA1 domain.

Belongs to the protein kinase superfamily. Ser/Thr protein kinase family. As to quaternary structure, interacts with HDR1. As to expression, strongly expressed in immature seeds. Mostly expressed in panicles, leaf sheaths and roots, and to a lower extent, in germinating seeds and leaf blades.

Its subcellular location is the nucleus. It carries out the reaction L-seryl-[protein] + ATP = O-phospho-L-seryl-[protein] + ADP + H(+). The enzyme catalyses L-threonyl-[protein] + ATP = O-phospho-L-threonyl-[protein] + ADP + H(+). In terms of biological role, suppressor of flowering in long days (LD) via the that up-regulation of HD1 and the down-regulation of EHD1. Can phosphorylate HD1 in the presence of HDR1. In Oryza sativa subsp. indica (Rice), this protein is Serine/threonine protein kinase OSK4.